A 336-amino-acid polypeptide reads, in one-letter code: tRNA N6-adenosine threonylcarbamoyltransferase (336 aa).

Fe cation-binding residues include His114 and His118. Substrate-binding positions include 136 to 140 (LVSGG), Asp169, Gly182, Asp186, and Asn275. Asp301 lines the Fe cation pocket.

Belongs to the KAE1 / TsaD family. Fe(2+) is required as a cofactor.

It is found in the cytoplasm. It carries out the reaction L-threonylcarbamoyladenylate + adenosine(37) in tRNA = N(6)-L-threonylcarbamoyladenosine(37) in tRNA + AMP + H(+). Required for the formation of a threonylcarbamoyl group on adenosine at position 37 (t(6)A37) in tRNAs that read codons beginning with adenine. Is involved in the transfer of the threonylcarbamoyl moiety of threonylcarbamoyl-AMP (TC-AMP) to the N6 group of A37, together with TsaE and TsaB. TsaD likely plays a direct catalytic role in this reaction. This chain is tRNA N6-adenosine threonylcarbamoyltransferase, found in Streptococcus pneumoniae (strain ATCC 700669 / Spain 23F-1).